Here is a 36-residue protein sequence, read N- to C-terminus: Pancreatic polypeptide (36 aa).

Y36 bears the Tyrosine amide mark.

It belongs to the NPY family.

It is found in the secreted. Hormone secreted by pancreatic cells that acts as a regulator of pancreatic and gastrointestinal functions probably by signaling through the G protein-coupled receptor NPY4R2. The polypeptide is Pancreatic polypeptide (PPY) (Didelphis virginiana (North American opossum)).